The sequence spans 953 residues: GATA zinc finger domain-containing protein 14 (953 aa).

Polar residues predominate over residues 1–21 (MFEKIPNQNSHSMGDNNTGYY). 2 disordered regions span residues 1–109 (MFEK…SPNR) and 216–756 (TYGS…TQPQ). Residues 22 to 89 (NNNNNNNNNN…QLPSPQLSQP (68 aa)) show a composition bias toward low complexity. Residues 90 to 109 (NSMNTTPNQTSPNLRSSPNR) are compositionally biased toward polar residues. Low complexity-rich tracts occupy residues 219–330 (SSNT…VNAN), 342–683 (NIYN…PNSS), and 690–756 (GNNG…TQPQ). Residues 893-918 (CTSCGTTQTPEWRKGPAGGKSLCNAC) form a GATA-type zinc finger. Residues 934-953 (KVETTSSPPSTSMNVVNLLN) form a disordered region.

This chain is GATA zinc finger domain-containing protein 14 (gtaN), found in Dictyostelium discoideum (Social amoeba).